The chain runs to 403 residues: Large ribosomal subunit protein uL3 (403 aa).

Residues 1 to 37 are disordered; sequence MSHRKFSAPRHGSLGFLPRKRSSRHRGKVKSFPKDDP. Position 13 is a phosphoserine (S13). Over residues 18 to 31 the composition is skewed to basic residues; that stretch reads PRKRSSRHRGKVKS. A Glycyl lysine isopeptide (Lys-Gly) (interchain with G-Cter in SUMO2) cross-link involves residue K39. K136 carries the post-translational modification N6-acetyllysine. Glycyl lysine isopeptide (Lys-Gly) (interchain with G-Cter in SUMO2) cross-links involve residues K224 and K226. H245 is subject to Tele-methylhistidine. An N6-acetyllysine; alternate mark is found at K286 and K294. K286 is covalently cross-linked (Glycyl lysine isopeptide (Lys-Gly) (interchain with G-Cter in SUMO2); alternate). K294 is covalently cross-linked (Glycyl lysine isopeptide (Lys-Gly) (interchain with G-Cter in SUMO1); alternate). Position 304 is a phosphoserine (S304). K366 carries the N6-acetyllysine; alternate modification. K366 is covalently cross-linked (Glycyl lysine isopeptide (Lys-Gly) (interchain with G-Cter in SUMO2); alternate). At K373 the chain carries N6-acetyllysine. Residues K386, K393, and K399 each participate in a glycyl lysine isopeptide (Lys-Gly) (interchain with G-Cter in SUMO2) cross-link.

The protein belongs to the universal ribosomal protein uL3 family. As to quaternary structure, component of the large ribosomal subunit. Interacts with DHX33. Constitutively monomethylated at His-245 by METTL18. Methylation at His-245 regulates translation elongation by slowing ribosome traversal on tyrosine codons: slower elongation provides enough time for proper folding of synthesized proteins and prevents cellular aggregation of tyrosine-rich proteins. It is not required for incorporation of RPL3 into ribosomes.

The protein localises to the nucleus. It localises to the nucleolus. Its subcellular location is the cytoplasm. Functionally, component of the large ribosomal subunit. The ribosome is a large ribonucleoprotein complex responsible for the synthesis of proteins in the cell. This Homo sapiens (Human) protein is Large ribosomal subunit protein uL3 (RPL3).